Here is a 594-residue protein sequence, read N- to C-terminus: Sucrose transport protein SUC3 (594 aa).

An N-acetylserine modification is found at Ser2. Residues Ser2 to Cys58 are Cytoplasmic-facing. Residues Val23–Asp50 are disordered. The segment covering Ser31–Ser46 has biased composition (low complexity). A helical transmembrane segment spans residues Ser59 to Leu79. The Extracellular segment spans residues Gln80–Ser98. Residues Ser99–Trp119 traverse the membrane as a helical segment. Topologically, residues Ser120–Arg131 are cytoplasmic. The chain crosses the membrane as a helical span at residues Pro132–Ala152. At Asp153–Arg174 the chain is on the extracellular side. Residues Ala175–Gly195 traverse the membrane as a helical segment. Over Pro196–Asn214 the chain is Cytoplasmic. The helical transmembrane segment at Ala215–Gly235 threads the bilayer. Residues Lys236–Lys257 lie on the Extracellular side of the membrane. Residues Ala258–Ala278 traverse the membrane as a helical segment. Over Lys279 to Ala365 the chain is Cytoplasmic. A helical transmembrane segment spans residues Met366–Phe386. At Asp387–Gly417 the chain is on the extracellular side. The chain crosses the membrane as a helical span at residues Ala418–Met438. Residues Cys439–Arg445 lie on the Cytoplasmic side of the membrane. The chain crosses the membrane as a helical span at residues Val446–Ser466. Residues Leu467–Thr489 are Extracellular-facing. An N-linked (GlcNAc...) asparagine glycan is attached at Asn484. The chain crosses the membrane as a helical span at residues Ala490–Phe510. Residues Ser511 to Gly525 lie on the Cytoplasmic side of the membrane. A helical transmembrane segment spans residues Leu526–Ala546. The Extracellular segment spans residues Gly547–Gly555. Residues Gly556–Leu576 traverse the membrane as a helical segment. Topologically, residues Gln577–Gly594 are cytoplasmic.

The protein belongs to the glycoside-pentoside-hexuronide (GPH) cation symporter transporter (TC 2.A.2.4) family. Homodimer. Interacts with SUC2 and SUC4. Mostly localized in parenchymatic cells next to vascular tissues (at protein level). Present in stipules, trichomes, hydathodes and guard cells of source leaves, as well as in lateral root tips and flowers.

Its subcellular location is the cell membrane. It catalyses the reaction sucrose(out) + H(+)(out) = sucrose(in) + H(+)(in). It participates in glycan biosynthesis; sucrose metabolism. With respect to regulation, inhibited by protonophores (e.g. dinitrophenol and carbonyl cyanide m-chlorophenyl-hydrazone (CCCP)) and SH group inhibitors (e.g. p-chloromercuribenzene sulphonic acid (PCMBS)). In terms of biological role, responsible for the transport of sucrose into the cell, with the concomitant uptake of protons (symport system). Can also transport maltose at a lesser rate. May also transport biotin. Probably involved in carpel maturation that leads to pod shatter and seed dispersal. This is Sucrose transport protein SUC3 from Arabidopsis thaliana (Mouse-ear cress).